Here is a 1055-residue protein sequence, read N- to C-terminus: Endo-1,4-beta-xylanase A (1055 aa).

The N-terminal stretch at 1 to 29 is a signal peptide; the sequence is MRKKRRGFLNASTAVLVGILAGFLGVVLA. Residues 30-357 are a; that stretch reads ATGALGFAVR…TTSAEIKLEM (328 aa). Residues 360 to 688 form the GH10 domain; sequence EEEIPALKDV…KLAYWAIVAP (329 aa). Residue Glu498 is the Proton donor of the active site. The active-site Nucleophile is Glu604. CBM-cenC domains are found at residues 720–851 and 895–1040; these read PIEI…TNSQ and KSVA…PTNN.

It belongs to the glycosyl hydrolase 10 (cellulase F) family.

The enzyme catalyses Endohydrolysis of (1-&gt;4)-beta-D-xylosidic linkages in xylans.. The polypeptide is Endo-1,4-beta-xylanase A (xynA) (Thermotoga neapolitana).